Consider the following 146-residue polypeptide: D-aminoacyl-tRNA deacylase (146 aa).

Positions 138–139 (GP) match the Gly-cisPro motif, important for rejection of L-amino acids motif.

This sequence belongs to the DTD family. In terms of assembly, homodimer.

Its subcellular location is the cytoplasm. It carries out the reaction glycyl-tRNA(Ala) + H2O = tRNA(Ala) + glycine + H(+). The enzyme catalyses a D-aminoacyl-tRNA + H2O = a tRNA + a D-alpha-amino acid + H(+). Functionally, an aminoacyl-tRNA editing enzyme that deacylates mischarged D-aminoacyl-tRNAs. Also deacylates mischarged glycyl-tRNA(Ala), protecting cells against glycine mischarging by AlaRS. Acts via tRNA-based rather than protein-based catalysis; rejects L-amino acids rather than detecting D-amino acids in the active site. By recycling D-aminoacyl-tRNA to D-amino acids and free tRNA molecules, this enzyme counteracts the toxicity associated with the formation of D-aminoacyl-tRNA entities in vivo and helps enforce protein L-homochirality. In Stenotrophomonas maltophilia (strain K279a), this protein is D-aminoacyl-tRNA deacylase.